A 542-amino-acid chain; its full sequence is Chaperonin GroEL 2 (542 aa).

Residues 30-33, K51, 87-91, G415, and D496 each bind ATP; these read TLGP and DGTTT.

The protein belongs to the chaperonin (HSP60) family. In terms of assembly, forms a cylinder of 14 subunits composed of two heptameric rings stacked back-to-back. Interacts with the co-chaperonin GroES.

The protein localises to the cytoplasm. It catalyses the reaction ATP + H2O + a folded polypeptide = ADP + phosphate + an unfolded polypeptide.. In terms of biological role, together with its co-chaperonin GroES, plays an essential role in assisting protein folding. The GroEL-GroES system forms a nano-cage that allows encapsulation of the non-native substrate proteins and provides a physical environment optimized to promote and accelerate protein folding. The polypeptide is Chaperonin GroEL 2 (Sinorhizobium fredii (strain NBRC 101917 / NGR234)).